Here is a 386-residue protein sequence, read N- to C-terminus: Myosin light chain kinase family member 4 (386 aa).

The residue at position 100 (serine 100) is a Phosphoserine. The Protein kinase domain occupies 107–361 (VSKSEILGGG…ASEALKHPWL (255 aa)). Residues 113 to 121 (LGGGRFGQV) and lysine 136 each bind ATP. Aspartate 227 acts as the Proton acceptor in catalysis.

Belongs to the protein kinase superfamily. CAMK Ser/Thr protein kinase family.

It carries out the reaction L-seryl-[protein] + ATP = O-phospho-L-seryl-[protein] + ADP + H(+). The enzyme catalyses L-threonyl-[protein] + ATP = O-phospho-L-threonyl-[protein] + ADP + H(+). In Mus musculus (Mouse), this protein is Myosin light chain kinase family member 4 (Mylk4).